A 228-amino-acid chain; its full sequence is 2-C-methyl-D-erythritol 4-phosphate cytidylyltransferase (228 aa).

It belongs to the IspD/TarI cytidylyltransferase family. IspD subfamily.

The catalysed reaction is 2-C-methyl-D-erythritol 4-phosphate + CTP + H(+) = 4-CDP-2-C-methyl-D-erythritol + diphosphate. The protein operates within isoprenoid biosynthesis; isopentenyl diphosphate biosynthesis via DXP pathway; isopentenyl diphosphate from 1-deoxy-D-xylulose 5-phosphate: step 2/6. Functionally, catalyzes the formation of 4-diphosphocytidyl-2-C-methyl-D-erythritol from CTP and 2-C-methyl-D-erythritol 4-phosphate (MEP). The sequence is that of 2-C-methyl-D-erythritol 4-phosphate cytidylyltransferase from Mannheimia succiniciproducens (strain KCTC 0769BP / MBEL55E).